We begin with the raw amino-acid sequence, 197 residues long: MSNYTATVYRETLETRVEVDLNLSGEGHFTAETGLPFLEHMLAQVARHGLLDLTVKASGDLHIDAHHTVEDIGITLGQALQQALGDKTGLQRYGYAYVPLDEALSRVVLDLSGRPSLHYRVNYPRARIGDFDVDLFQEFFQGLVNHAAMTLHIDNLHGRNAHHIAETIFKAFGRALRVAVEYDPRRKGQLASTKGML.

This sequence belongs to the imidazoleglycerol-phosphate dehydratase family.

The protein resides in the cytoplasm. The catalysed reaction is D-erythro-1-(imidazol-4-yl)glycerol 3-phosphate = 3-(imidazol-4-yl)-2-oxopropyl phosphate + H2O. It participates in amino-acid biosynthesis; L-histidine biosynthesis; L-histidine from 5-phospho-alpha-D-ribose 1-diphosphate: step 6/9. The protein is Imidazoleglycerol-phosphate dehydratase of Nitrosococcus oceani (strain ATCC 19707 / BCRC 17464 / JCM 30415 / NCIMB 11848 / C-107).